Reading from the N-terminus, the 282-residue chain is Pantothenate synthetase (282 aa).

Position 30–37 (30–37 (MGALHAGH)) interacts with ATP. H37 functions as the Proton donor in the catalytic mechanism. Q61 contacts (R)-pantoate. Residue Q61 coordinates beta-alanine. 147 to 150 (GEKD) serves as a coordination point for ATP. Q153 is a (R)-pantoate binding site. ATP-binding positions include V176 and 184–187 (LSSR).

It belongs to the pantothenate synthetase family. Homodimer.

The protein resides in the cytoplasm. The enzyme catalyses (R)-pantoate + beta-alanine + ATP = (R)-pantothenate + AMP + diphosphate + H(+). It participates in cofactor biosynthesis; (R)-pantothenate biosynthesis; (R)-pantothenate from (R)-pantoate and beta-alanine: step 1/1. Catalyzes the condensation of pantoate with beta-alanine in an ATP-dependent reaction via a pantoyl-adenylate intermediate. The polypeptide is Pantothenate synthetase (Bacteroides fragilis (strain ATCC 25285 / DSM 2151 / CCUG 4856 / JCM 11019 / LMG 10263 / NCTC 9343 / Onslow / VPI 2553 / EN-2)).